The sequence spans 339 residues: 7,8-didemethyl-8-hydroxy-5-deazariboflavin synthase (339 aa).

Residues 25–256 form the Radical SAM core domain; that stretch reads ATYSPAYTIV…PDITIQIPPN (232 aa). [4Fe-4S] cluster-binding residues include Cys39, Cys43, and Cys46.

This sequence belongs to the radical SAM superfamily. CofG family. As to quaternary structure, consists of two subunits, CofG and CofH. [4Fe-4S] cluster is required as a cofactor.

The enzyme catalyses 5-amino-5-(4-hydroxybenzyl)-6-(D-ribitylimino)-5,6-dihydrouracil + S-adenosyl-L-methionine = 7,8-didemethyl-8-hydroxy-5-deazariboflavin + 5'-deoxyadenosine + L-methionine + NH4(+) + H(+). Its pathway is cofactor biosynthesis; coenzyme F0 biosynthesis. Its function is as follows. Catalyzes the radical-mediated synthesis of 7,8-didemethyl-8-hydroxy-5-deazariboflavin from 5-amino-5-(4-hydroxybenzyl)-6-(D-ribitylimino)-5,6-dihydrouracil. The protein is 7,8-didemethyl-8-hydroxy-5-deazariboflavin synthase of Nostoc sp. (strain PCC 7120 / SAG 25.82 / UTEX 2576).